The chain runs to 444 residues: MLKIALESLGCSKNLVDAEIMMGILNNKGYKLIGDFEEADVIIVNTCGFIESAKQESIDTIINFAELKKTGNLKLLIVTGCLAQRYSEELKTEIPEIDAIVGTGSYQNIDKILKELSEIHQIVSLNDIEFVFNEDLPRYISTPSYMAYLKIGEGCSNNCTYCIIPKLRGKYRSRKFEDIIKEAKKLAESGVKELVVIAQDTTKYGFDLYGKERLSELLEELAKIDGFKWIRVMYSYPESITEELIQVIKKYDNICSYFDMPIQHASNNILKLMNRKTTKEDILNKINLIRSNIPDAILRTTIIVGFPGETEDDFKQLVDFVEEVKFDRLGAFAYSREEDTPADRLPNHIDEEVKIQRRDTLMMIQQKISEELNDKKIGKTYEVLIEEQIEDNVYTGRTQGDAEEIDSIVYVKSVDNLEVGEFVSVQINDAMEYDLMGDVLYELA.

Positions 2–118 constitute an MTTase N-terminal domain; that stretch reads LKIALESLGC…IDKILKELSE (117 aa). [4Fe-4S] cluster contacts are provided by C11, C47, C81, C155, C159, and C162. The region spanning 141–371 is the Radical SAM core domain; that stretch reads STPSYMAYLK…MMIQQKISEE (231 aa). One can recognise a TRAM domain in the interval 374 to 441; the sequence is DKKIGKTYEV…EYDLMGDVLY (68 aa).

The protein belongs to the methylthiotransferase family. RimO subfamily. Requires [4Fe-4S] cluster as cofactor.

It is found in the cytoplasm. The catalysed reaction is L-aspartate(89)-[ribosomal protein uS12]-hydrogen + (sulfur carrier)-SH + AH2 + 2 S-adenosyl-L-methionine = 3-methylsulfanyl-L-aspartate(89)-[ribosomal protein uS12]-hydrogen + (sulfur carrier)-H + 5'-deoxyadenosine + L-methionine + A + S-adenosyl-L-homocysteine + 2 H(+). Functionally, catalyzes the methylthiolation of an aspartic acid residue of ribosomal protein uS12. The sequence is that of Ribosomal protein uS12 methylthiotransferase RimO from Clostridioides difficile (strain 630) (Peptoclostridium difficile).